A 55-amino-acid chain; its full sequence is Large ribosomal subunit protein bL33 (55 aa).

The segment covering methionine 1 to leucine 11 has biased composition (basic and acidic residues). The tract at residues methionine 1–lysine 27 is disordered. Residues threonine 14–threonine 24 are compositionally biased toward polar residues.

The protein belongs to the bacterial ribosomal protein bL33 family.

In Herminiimonas arsenicoxydans, this protein is Large ribosomal subunit protein bL33.